Consider the following 272-residue polypeptide: NADH-dependent L-xylulose reductase (272 aa).

NADP(+)-binding residues include Leu-24 and Asp-78. The active-site Proton donor is Ser-160. Residues Tyr-175, Lys-179, and Ile-208 each contribute to the NADP(+) site. Tyr-175 acts as the Proton acceptor in catalysis. Residue Lys-179 is the Lowers pKa of active site Tyr of the active site.

Belongs to the short-chain dehydrogenases/reductases (SDR) family.

The catalysed reaction is xylitol + NAD(+) = L-xylulose + NADH + H(+). It carries out the reaction D-arabinitol + NAD(+) = D-ribulose + NADH + H(+). Its function is as follows. NADH-dependent L-xylulose reductase; part of the yeast pathway for L-arabinose catabolism. Reversibly converts L-xylulose to xylitol and D-ribulose to D-arabinitol. It has a much lower activity with D-xylulose. Sugar alcohols can serve as a substrate when the hydroxyl group of C-2 is in the L- and the hydroxyl group of the C-3 is in the D-configuration. Also seems to be specific for sugar alcohols that have not more than 5 carbons since no activity is observed with dulcitol (galactitol), which has the hydroxyl group of C-2 in L- and of C-3 in D-configuration, but is a six-carbon sugar alcohol. This Ambrosiozyma monospora (Yeast) protein is NADH-dependent L-xylulose reductase.